The following is a 156-amino-acid chain: Small ribosomal subunit protein uS7 (156 aa).

It belongs to the universal ribosomal protein uS7 family. As to quaternary structure, part of the 30S ribosomal subunit. Contacts proteins S9 and S11.

In terms of biological role, one of the primary rRNA binding proteins, it binds directly to 16S rRNA where it nucleates assembly of the head domain of the 30S subunit. Is located at the subunit interface close to the decoding center, probably blocks exit of the E-site tRNA. The protein is Small ribosomal subunit protein uS7 of Bradyrhizobium sp. (strain BTAi1 / ATCC BAA-1182).